A 205-amino-acid chain; its full sequence is Probable GTP-binding protein EngB (205 aa).

The 175-residue stretch at 29-203 (QGAEIAFIGR…KAVLSQWFRS (175 aa)) folds into the EngB-type G domain. GTP contacts are provided by residues 37-44 (GRSNAGKS), 64-68 (GRTQM), 82-85 (DLPG), 149-152 (TKSD), and 182-184 (FSS). Mg(2+)-binding residues include Ser-44 and Thr-66.

Belongs to the TRAFAC class TrmE-Era-EngA-EngB-Septin-like GTPase superfamily. EngB GTPase family. Mg(2+) is required as a cofactor.

Its function is as follows. Necessary for normal cell division and for the maintenance of normal septation. This chain is Probable GTP-binding protein EngB, found in Coxiella burnetii (strain RSA 493 / Nine Mile phase I).